The primary structure comprises 555 residues: Glutamine--tRNA ligase (555 aa).

The 'HIGH' region motif lies at 34 to 44 (PEPNGYLHIGH). ATP is bound by residues 35–37 (EPN) and 41–47 (HIGHAKS). Positions 67 and 212 each coordinate L-glutamine. ATP-binding positions include T231, 261 to 262 (RL), and 269 to 271 (MSK). The 'KMSKS' region signature appears at 268 to 272 (VMSKR). The interval 317–324 (TKQDNTIE) is interaction with tRNA.

It belongs to the class-I aminoacyl-tRNA synthetase family. In terms of assembly, monomer.

The protein localises to the cytoplasm. It catalyses the reaction tRNA(Gln) + L-glutamine + ATP = L-glutaminyl-tRNA(Gln) + AMP + diphosphate. This is Glutamine--tRNA ligase from Citrobacter koseri (strain ATCC BAA-895 / CDC 4225-83 / SGSC4696).